The chain runs to 213 residues: Calcineurin B-like protein 8 (213 aa).

Glycine 2 is lipidated: N-myristoyl glycine. 4 EF-hand domains span residues 31 to 66 (EVEA…RNSN), 67 to 102 (KKNL…FHPE), 104 to 139 (PLGD…LLNE), and 148 to 183 (AVEQ…NPAL). Ca(2+)-binding residues include aspartate 161, asparagine 163, aspartate 165, lysine 167, and glutamate 172.

It belongs to the calcineurin regulatory subunit family. Homodimer. Expressed at low levels in roots, shoots, culms, leaves and young spikelets.

The protein localises to the cell membrane. Functionally, acts as a calcium sensor. May function as positive regulator of salt stress responses. CBL proteins interact with CIPK serine-threonine protein kinases. Binding of a CBL protein to the regulatory NAF domain of a CIPK protein lead to the activation of the kinase in a calcium-dependent manner. This is Calcineurin B-like protein 8 (CBL8) from Oryza sativa subsp. japonica (Rice).